The sequence spans 244 residues: Transcription initiation factor TFIID subunit 14 (244 aa).

Positions 1–134 (MVATVKRTIR…PLLTEELAKS (134 aa)) constitute a YEATS domain. Acylated histone binding regions lie at residues 59–61 (HPT) and 81–83 (WGG). Residues 133 to 169 (KSGSTEETTANTGTIGKRRTTTNTTAEPKAKRAKTGS) are disordered. Residues 143–157 (NTGTIGKRRTTTNTT) show a composition bias toward low complexity. Lys-181 participates in a covalent cross-link: Glycyl lysine isopeptide (Lys-Gly) (interchain with G-Cter in ubiquitin).

Belongs to the TAF14 family. The 1.2 MDa TFIID complex is composed of TATA binding protein (TBP) and the 14 TBP-associated factors. One copy of each TAF1, TAF2, TAF3, TAF7, TAF8, TAF11, TAF13, two copies of each TAF4, TAF5, TAF6, TAF9, TAF10, TAF12, and three copies of TAF14. TFIIF is composed of three different subunits: TFG1/RAP74, TFG2/RAP30 and TAF14. Component of the SWI/SNF global transcription activator complex. The 1.14 MDa SWI/SNF complex is composed of 11 different subunits: one copy each of SWI1, SNF2/SWI2, SNF5, SNF12/SWP73, ARP7/SWP61, ARP9/SWP59; two copies each of SWI3, SNF6, SNF11, SWP82; and three copies of TAF14/SWP29. Component of the chromatin-remodeling INO80 complex, at least composed of ARP4, ARP5, ARP8, RVB1, RVB2, TAF14, NHP10, IES1, IES3, IES4, IES6, ACT1, IES2, IES5 and INO80. Component of the NuA3 histone acetyltransferase (HAT) complex. The NuA3 HAT complex has 2 functionally distinct forms that participate in transcription. The NuA3b HAT complex contains an additional subunit, PDP3.

It localises to the nucleus. Functionally, functions as a component of the DNA-binding general transcription factor complex TFIID, the RNA polymerase II associated general transcription factor complex TFIIF, and the chromatin-remodeling complex SWI/SNF. Binding of TFIID to a promoter (with or without TATA element) is the initial step in preinitiation complex (PIC) formation. TFIID plays a key role in the regulation of gene expression by RNA polymerase II through different activities such as transcription activator interaction, core promoter recognition and selectivity, TFIIA and TFIIB interaction, chromatin modification (histone acetylation by TAF1), facilitation of DNA opening and initiation of transcription. TFIIF is essential for the initiation of transcription by RNA polymerase II. TFIIF functions include the recruitment of RNA polymerase II to the promoter bound DNA-TBP-TFIIB complex, decreasing the affinity of RNA polymerase II for non-specific DNA, allowing for the subsequent recruitment of TFIIE and TFIIH, and facilitating RNA polymerase II elongation. TAF14 acts as a chromatin reader that specifically recognizes and binds histones that are acylated. Recognizes and binds histone H3 acetylated or crotonylated at 'Lys-9' (H3K9ac and H3K9cr, respectively), with some preference for crotonylated lysine. Component of the SWI/SNF complex, an ATP-dependent chromatin-remodeling complex, is required for the positive and negative regulation of gene expression of a large number of genes. It changes chromatin structure by altering DNA-histone contacts within a nucleosome, leading eventually to a change in nucleosome position, thus facilitating or repressing binding of gene-specific transcription factors. Component of the NuA3 histone acetyltransferase complex. The NuA3 HAT complex has 2 functionally distinct forms. NuA3a binds H3K4me3, through the PHD finger of YNG1, and acetylates H3K14 at the promoter region of actively transcribed genes to promote transcription initiation. NuA3b binds H3K36me3 at the coding regions of actively transcribed genes, through the PWWP domain of PDP3, and coordinates transcription elongation. Does not bind DNA. The protein is Transcription initiation factor TFIID subunit 14 (TAF14) of Saccharomyces cerevisiae (strain ATCC 204508 / S288c) (Baker's yeast).